The chain runs to 204 residues: Small rubber particle protein (204 aa).

This sequence belongs to the REF/SRPP family. Auto-assembles in solution into stable nanomultimers of a globular nature. Not glycosylated. Post-translationally, the N-terminus is blocked. In terms of processing, consistent shifts of about 266 Da observed by MS in various forms of the intact protein suggest the addition of stearolyl groups. As to expression, highly expressed in the specialized vessel laticifers, but localized only in the laticifer layers in the conducting phloem. Also detected in leaves.

The protein resides in the cytoplasm. Involved in the biosynthesis of rubber, an isoprenoid polymer (cis-1,4-polyisoprene). The protein is Small rubber particle protein of Hevea brasiliensis (Para rubber tree).